A 150-amino-acid polypeptide reads, in one-letter code: SsrA-binding protein (150 aa).

It belongs to the SmpB family.

The protein resides in the cytoplasm. Its function is as follows. Required for rescue of stalled ribosomes mediated by trans-translation. Binds to transfer-messenger RNA (tmRNA), required for stable association of tmRNA with ribosomes. tmRNA and SmpB together mimic tRNA shape, replacing the anticodon stem-loop with SmpB. tmRNA is encoded by the ssrA gene; the 2 termini fold to resemble tRNA(Ala) and it encodes a 'tag peptide', a short internal open reading frame. During trans-translation Ala-aminoacylated tmRNA acts like a tRNA, entering the A-site of stalled ribosomes, displacing the stalled mRNA. The ribosome then switches to translate the ORF on the tmRNA; the nascent peptide is terminated with the 'tag peptide' encoded by the tmRNA and targeted for degradation. The ribosome is freed to recommence translation, which seems to be the essential function of trans-translation. This is SsrA-binding protein from Flavobacterium psychrophilum (strain ATCC 49511 / DSM 21280 / CIP 103535 / JIP02/86).